Here is a 68-residue protein sequence, read N- to C-terminus: Conotoxin reg3.14 (68 aa).

A signal peptide spans 1-22; the sequence is MMSKLGVLLTICLLLFPLSVLP. A propeptide spanning residues 23–52 is cleaved from the precursor; sequence LDGDQPADQPAERMQDISAEQNPWFDPVKR. Cystine bridges form between Cys53-Cys68, Cys54-Cys64, and Cys59-Cys67.

It belongs to the conotoxin M superfamily. In terms of tissue distribution, expressed by the venom duct.

Its subcellular location is the secreted. The polypeptide is Conotoxin reg3.14 (Conus regius (Crown cone)).